A 472-amino-acid chain; its full sequence is Meiotic spindle formation protein mei-1 (472 aa).

The interval histidine 83–alanine 161 is disordered. At serine 92 the chain carries Phosphoserine; by mbk-2. 2 stretches are compositionally biased toward polar residues: residues lysine 134–proline 143 and asparagine 150–alanine 161. Residues glycine 233–threonine 240 and arginine 351–arginine 352 each bind ATP.

It belongs to the AAA ATPase family. Katanin p60 subunit A1 subfamily. In terms of assembly, homohexamer; ATP hydrolysis initiates a cycle between an open spiral and a closed ring conformation which is probably involved in pulling tubulin dimers out from microtubules. Interacts with mei-2, which may serve as a targeting subunit. Interacts with mel-26, which targets mei-1 for ubiquitin mediated proteolysis. Interacts with phosphatase pph-4.1. Post-translationally, phosphorylated. Phosphorylation by mbk-2 is required for its rapid degradation following meiosis II. Likely dephosphorylated by the PP4 complex composed of catalytic subunit pph-4.1 and regulatory subunit ppfr-1. Polyubiquitination targets the protein for rapid degradation via the ubiquitin system at the end of meiosis. The BTB domain protein mel-26 may serve to specifically target mei-1 for ubiquitination by cul-3 containing complexes. The cul-3 protein is in turn regulated by neddylation by ned-8.

It is found in the cytoplasm. It localises to the cytoskeleton. The protein localises to the spindle pole. The protein resides in the chromosome. It carries out the reaction n ATP + n H2O + a microtubule = n ADP + n phosphate + (n+1) alpha/beta tubulin heterodimers.. Its activity is regulated as follows. ATPase activity is stimulated by microtubules, which promote homooligomerization. ATP-dependent microtubule severing is stimulated by interaction with mei-2. In terms of biological role, catalytic subunit of a complex which severs microtubules in an ATP-dependent manner. Microtubule severing may promote rapid reorganization of cellular microtubule arrays. Required specifically for meiotic spindle formation in the female germline; the presence of this protein is inimical to the formation of mitotic spindles. In body wall muscles, regulates organization of myosin thick filaments. The sequence is that of Meiotic spindle formation protein mei-1 from Caenorhabditis elegans.